A 188-amino-acid polypeptide reads, in one-letter code: Cell division protein SepF (188 aa).

Residues 29-53 are disordered; sequence EQQDQDQRATQADGGALATLGDSNP.

The protein belongs to the SepF family. Homodimer. Interacts with FtsZ.

It localises to the cytoplasm. Cell division protein that is part of the divisome complex and is recruited early to the Z-ring. Probably stimulates Z-ring formation, perhaps through the cross-linking of FtsZ protofilaments. Its function overlaps with FtsA. This is Cell division protein SepF from Synechococcus sp. (strain CC9902).